Reading from the N-terminus, the 399-residue chain is F420-dependent formate dehydrogenase subunit beta (399 aa).

4Fe-4S ferredoxin-type domains lie at 287-307 (TEYMDDFSRCLKCYGCREACP) and 339-367 (ERMLHMVESCTNCGQCEEVCPGEIPLAKI). Positions 296, 299, 302, 306, 348, 351, 354, and 358 each coordinate [4Fe-4S] cluster.

The protein belongs to the FrhB family. Dimer of an alpha (FdhA) and a beta (FdhB) subunit. [4Fe-4S] cluster serves as cofactor. It depends on FAD as a cofactor. Zn(2+) is required as a cofactor.

It catalyses the reaction oxidized coenzyme F420-(gamma-L-Glu)(n) + formate + 2 H(+) = reduced coenzyme F420-(gamma-L-Glu)(n) + CO2. Is extremely sensitive to oxygen. Contains a FAD that is required for coenzyme F420-dependent activity but not for methyl viologen-dependent activity. Preincubation of the FAD-depleted enzyme with FAD restores coenzyme F420-dependent activity. Neither FMN nor FADH2 can replace FAD. Strongly inhibited by cyanide, azide, alpha,alpha-dipyridyl and 1,10-phenanthroline. Catalyzes the oxidation of formate to carbon dioxide, with coenzyme F420 as the electron acceptor. In vitro can also use methyl viologen, 7,8-didemethyl-8-hydroxy-5-deazariboflavin (or FO, a hydrolytic derivative of coenzyme F420), FMN and FAD as electron acceptors, but not NAD(+) or NADP(+). In Methanobacterium formicicum, this protein is F420-dependent formate dehydrogenase subunit beta.